We begin with the raw amino-acid sequence, 594 residues long: MAAESGELIGACEFMKDRLYFATLRNRPKSTVNTHYFSIDEELVYENFYADFGPLNLAMVYRYCCKLNKKLKSYSLSRKKIVHYTCFDQRKRANAAFLIGAYAVIYLKKTPEEAYRALLSGSNPPYLPFRDASFGNCTYNLTILDCLQGIRKGLQHGFFDFETFDVDEYEHYERVENGDFNWIVPGKFLAFSGPHPKSKIENGYPLHAPEAYFPYFKKHNVTAVVRLNKKIYEAKRFTDAGFEHYDLFFIDGSTPSDNIVRRFLNICENTEGAIAVHCKAGLGRTGTLIACYVMKHYRFTHAEIIAWIRICRPGSIIGPQQHFLEEKQASLWVQGDIFRSKLKNRPSSEGSINKILSGLDDMSIGGNLSKTQNMERFGEDNLEDDDVEMKNGITQGDKLRALKSQRQPRTSPSCAFRSDDTKGHPRAVSQPFRLSSSLQGSAVTLKTSKMALSPSATAKRINRTSLSSGATVRSFSINSRLASSLGNLNAATDDPENKKTSSSSKAGFTASPFTNLLNGSSQPTTRNYPELNNNQYNRSSNSNGGNLNSPPGPHSAKTEEHTTILRPSYTGLSSSSARFLSRSIPSLQSEYVHY.

An a region spans residues 7 to 162 (ELIGACEFMK…GLQHGFFDFE (156 aa)). Residues 163–176 (TFDVDEYEHYERVE) form a linker region. A b region spans residues 177–343 (NGDFNWIVPG…QGDIFRSKLK (167 aa)). One can recognise a Tyrosine-protein phosphatase domain in the interval 179-336 (DFNWIVPGKF…KQASLWVQGD (158 aa)). Cys-278 functions as the Phosphocysteine intermediate in the catalytic mechanism. The interval 396-435 (GDKLRALKSQRQPRTSPSCAFRSDDTKGHPRAVSQPFRLS) is disordered. Residues 404–413 (SQRQPRTSPS) show a composition bias toward polar residues. A Phosphoserine modification is found at Ser-484. Positions 487 to 560 (NLNAATDDPE…PGPHSAKTEE (74 aa)) are disordered. Polar residues predominate over residues 500-531 (TSSSSKAGFTASPFTNLLNGSSQPTTRNYPEL). Positions 532 to 549 (NNNQYNRSSNSNGGNLNS) are enriched in low complexity. Residue Ser-583 is modified to Phosphoserine.

This sequence belongs to the protein-tyrosine phosphatase family. Non-receptor class CDC14 subfamily. In terms of assembly, interacts with KIF20A, which is required to localize CDC14 to the midzone of the mitotic spindle.

The protein resides in the nucleus. It is found in the cytoplasm. The protein localises to the cytoskeleton. Its subcellular location is the microtubule organizing center. It localises to the centrosome. The protein resides in the spindle pole. It is found in the spindle. The protein localises to the cell projection. Its subcellular location is the kinocilium. It localises to the stereocilium. The catalysed reaction is O-phospho-L-tyrosyl-[protein] + H2O = L-tyrosyl-[protein] + phosphate. The enzyme catalyses O-phospho-L-seryl-[protein] + H2O = L-seryl-[protein] + phosphate. It catalyses the reaction O-phospho-L-threonyl-[protein] + H2O = L-threonyl-[protein] + phosphate. Dual-specificity phosphatase. Required for centrosome separation and productive cytokinesis during cell division. Dephosphorylates SIRT2 around early anaphase. May dephosphorylate the APC subunit FZR1/CDH1, thereby promoting APC-FZR1 dependent degradation of mitotic cyclins and subsequent exit from mitosis. Required for normal hearing. In Homo sapiens (Human), this protein is Dual specificity protein phosphatase CDC14A (CDC14A).